A 205-amino-acid polypeptide reads, in one-letter code: Urease accessory protein UreG (205 aa).

10–17 (GPVGSGKT) is a binding site for GTP.

The protein belongs to the SIMIBI class G3E GTPase family. UreG subfamily. In terms of assembly, homodimer. UreD, UreF and UreG form a complex that acts as a GTP-hydrolysis-dependent molecular chaperone, activating the urease apoprotein by helping to assemble the nickel containing metallocenter of UreC. The UreE protein probably delivers the nickel.

The protein localises to the cytoplasm. In terms of biological role, facilitates the functional incorporation of the urease nickel metallocenter. This process requires GTP hydrolysis, probably effectuated by UreG. This Corynebacterium urealyticum (strain ATCC 43042 / DSM 7109) protein is Urease accessory protein UreG.